A 409-amino-acid polypeptide reads, in one-letter code: Elongation factor Tu (409 aa).

The tr-type G domain occupies 10–214 (KPHVNVGTIG…AVDSYIPTPE (205 aa)). The tract at residues 19–26 (GHVDHGKT) is G1. Residue 19-26 (GHVDHGKT) participates in GTP binding. Thr-26 contributes to the Mg(2+) binding site. Positions 60–64 (GITIN) are G2. Residues 81–84 (DCPG) form a G3 region. Residues 81-85 (DCPGH) and 136-139 (NKVD) each bind GTP. The tract at residues 136–139 (NKVD) is G4. The interval 174–176 (SAL) is G5.

Belongs to the TRAFAC class translation factor GTPase superfamily. Classic translation factor GTPase family. EF-Tu/EF-1A subfamily. Monomer.

The protein localises to the cytoplasm. The catalysed reaction is GTP + H2O = GDP + phosphate + H(+). GTP hydrolase that promotes the GTP-dependent binding of aminoacyl-tRNA to the A-site of ribosomes during protein biosynthesis. The sequence is that of Elongation factor Tu from Synechococcus sp. (strain JA-3-3Ab) (Cyanobacteria bacterium Yellowstone A-Prime).